A 258-amino-acid polypeptide reads, in one-letter code: uncharacterized protein (258 aa).

3 Solcar repeats span residues Lys-9–Arg-78, Pro-81–Lys-160, and Asp-165–His-246. Helical transmembrane passes span Ile-11–Ile-31, Gly-53–Glu-73, Leu-87–Val-107, Met-139–Lys-159, Pro-171–Ile-191, and Phe-218–Thr-239.

The protein belongs to the mitochondrial carrier (TC 2.A.29) family.

The protein resides in the mitochondrion inner membrane. This is an uncharacterized protein from Schizosaccharomyces pombe (strain 972 / ATCC 24843) (Fission yeast).